The chain runs to 463 residues: Cysteine--tRNA ligase (463 aa).

Residue Cys33 participates in Zn(2+) binding. A 'HIGH' region motif is present at residues Pro35–Asn45. Residues Cys221, His246, and Glu250 each contribute to the Zn(2+) site. Residues Lys279–Ser283 carry the 'KMSKS' region motif. Lys282 lines the ATP pocket.

It belongs to the class-I aminoacyl-tRNA synthetase family. As to quaternary structure, monomer. The cofactor is Zn(2+).

The protein resides in the cytoplasm. It catalyses the reaction tRNA(Cys) + L-cysteine + ATP = L-cysteinyl-tRNA(Cys) + AMP + diphosphate. The protein is Cysteine--tRNA ligase of Rhizobium leguminosarum bv. trifolii (strain WSM2304).